The chain runs to 75 residues: Probable protein BRICK1-A (75 aa).

Positions 41–72 form a coiled coil; that stretch reads MSCRSRLATLNEKLTALERRIEYIEARVTKGE.

The protein belongs to the BRK1 family.

The protein localises to the cytoplasm. It localises to the cytoskeleton. Functionally, involved in regulation of actin and microtubule organization. Part of a WAVE complex that activates the Arp2/3 complex. This chain is Probable protein BRICK1-A (brk1-a), found in Xenopus laevis (African clawed frog).